The sequence spans 649 residues: 1-deoxy-D-xylulose-5-phosphate synthase 1 (649 aa).

Thiamine diphosphate contacts are provided by residues H73 and 113-115 (SHA). Residue D144 participates in Mg(2+) binding. Thiamine diphosphate contacts are provided by residues 145–146 (GA), N174, Y285, and E367. Position 174 (N174) interacts with Mg(2+). The segment at 623–649 (LLPGTGTRPGAQEYRPRMPLTDWSEPA) is disordered.

It belongs to the transketolase family. DXPS subfamily. In terms of assembly, homodimer. Mg(2+) is required as a cofactor. Thiamine diphosphate serves as cofactor.

The enzyme catalyses D-glyceraldehyde 3-phosphate + pyruvate + H(+) = 1-deoxy-D-xylulose 5-phosphate + CO2. It participates in metabolic intermediate biosynthesis; 1-deoxy-D-xylulose 5-phosphate biosynthesis; 1-deoxy-D-xylulose 5-phosphate from D-glyceraldehyde 3-phosphate and pyruvate: step 1/1. Functionally, catalyzes the acyloin condensation reaction between C atoms 2 and 3 of pyruvate and glyceraldehyde 3-phosphate to yield 1-deoxy-D-xylulose-5-phosphate (DXP). The chain is 1-deoxy-D-xylulose-5-phosphate synthase 1 from Kitasatospora griseola (Streptomyces griseolosporeus).